We begin with the raw amino-acid sequence, 610 residues long: UvrABC system protein C (610 aa).

The 79-residue stretch at Ser-16 to Val-94 folds into the GIY-YIG domain. One can recognise a UVR domain in the interval Asp-204–Val-239.

This sequence belongs to the UvrC family. Interacts with UvrB in an incision complex.

The protein resides in the cytoplasm. The UvrABC repair system catalyzes the recognition and processing of DNA lesions. UvrC both incises the 5' and 3' sides of the lesion. The N-terminal half is responsible for the 3' incision and the C-terminal half is responsible for the 5' incision. This chain is UvrABC system protein C, found in Salmonella paratyphi C (strain RKS4594).